The following is a 376-amino-acid chain: Nucleoside diphosphate kinase homolog 7 (376 aa).

The DM10 domain maps to 3–91; the sequence is HSERFVFIAE…YTARQLGSRK (89 aa).

This sequence belongs to the NDK family. As to quaternary structure, component of sperm flagellar doublet microtubules. Component of the gamma-tubulin ring complex. Post-translationally, undergoes autophosphorylation. Expressed in airway epithelial cells.

It localises to the cytoplasm. Its subcellular location is the cytoskeleton. The protein localises to the microtubule organizing center. It is found in the centrosome. The protein resides in the nucleus. It localises to the spindle. Its subcellular location is the cilium axoneme. The protein localises to the flagellum axoneme. It is found in the cell projection. The protein resides in the cilium. Possesses an intrinsic kinase activity. Displays 3'-5' exonuclease activity with a preference for single-stranded DNA. Does not seem to have nucleoside diphosphate kinase activity. Functional component of the gamma-tubulin ring complex, implicated in the regulation of the microtubule-nucleating activity of the gamma-tubulin ring complex in centrosomes, in a kinase activity-dependent manner. Part of the dynein-decorated doublet microtubules (DMTs) in cilia axoneme, which is required for motile cilia beating. This is Nucleoside diphosphate kinase homolog 7 from Homo sapiens (Human).